A 558-amino-acid chain; its full sequence is Pyrethroid hydrolase Ces2a (558 aa).

The N-terminal stretch at 1-26 is a signal peptide; that stretch reads MPLARLPGWLCVVACGLLLLLQHVHG. A disulfide bridge connects residues Cys95 and Cys122. Position 209 is an N6-succinyllysine (Lys209). Catalysis depends on Ser227, which acts as the Acyl-ester intermediate. An N-linked (GlcNAc...) asparagine glycan is attached at Asn275. Cysteines 279 and 290 form a disulfide. An N6-succinyllysine modification is found at Lys296. Glu344 acts as the Charge relay system in catalysis. Asn361 carries N-linked (GlcNAc...) asparagine glycosylation. His456 acts as the Charge relay system in catalysis.

It belongs to the type-B carboxylesterase/lipase family.

Its subcellular location is the microsome. The enzyme catalyses (-)-trans-permethrin + H2O = (3-phenoxyphenyl)methanol + (1S,3R)-3-(2,2-dichlorovinyl)-2,2-dimethylcyclopropanecarboxylate + H(+). The catalysed reaction is all-trans-retinyl hexadecanoate + H2O = all-trans-retinol + hexadecanoate + H(+). In terms of biological role, carboxylesterases that catalyzes the hydrolysis of pyrethroids pesticides. Hydrolyzes permethrin faster than cypermethrin. Hydrolyzes retinyl esters. This chain is Pyrethroid hydrolase Ces2a, found in Mus musculus (Mouse).